Here is a 116-residue protein sequence, read N- to C-terminus: Peptidyl-tRNA hydrolase (116 aa).

This sequence belongs to the PTH2 family.

The protein resides in the cytoplasm. The enzyme catalyses an N-acyl-L-alpha-aminoacyl-tRNA + H2O = an N-acyl-L-amino acid + a tRNA + H(+). The natural substrate for this enzyme may be peptidyl-tRNAs which drop off the ribosome during protein synthesis. In Methanococcus vannielii (strain ATCC 35089 / DSM 1224 / JCM 13029 / OCM 148 / SB), this protein is Peptidyl-tRNA hydrolase.